The primary structure comprises 953 residues: Coatomer subunit beta (953 aa).

Thr-2 bears the N-acetylthreonine mark. HEAT repeat units follow at residues 96 to 131, 132 to 168, 240 to 276, 277 to 314, 316 to 353, and 396 to 433; these read HEMI…KEAE, LLEP…NFEH, SERA…SAPT, AIKA…HPAH, RVLQ…SRNV, and DMAA…RFDN. Residue Lys-494 is modified to N6-acetyllysine.

As to quaternary structure, oligomeric complex that consists of at least the alpha, beta, beta', gamma, delta, epsilon and zeta subunits. Interacts with CAPN8 and PRKCE. Interacts with SCYL1. Interacts with COPG1. Interacts with ARF1 (myristoylated); this interaction is required for binding of COPB1 to Golgi membranes. Interacts (via trunk domain) with ARF1 (via switch I region); the interaction is direct. Interacts with KCNK2 (via N-terminus); this interaction increases the channel-mediated whole cell currents and promotes plasma membrane expression of KCNK2. Interacts with STX17. Interacts with TMEM115. Interacts with TMEM41B. As to expression, high expression in the lung, kidney, skeletal muscle and small intestine, and lower level of expression in heart, liver, spleen, stomach and fat.

The protein resides in the cytoplasm. The protein localises to the golgi apparatus membrane. Its subcellular location is the cytoplasmic vesicle. It is found in the COPI-coated vesicle membrane. It localises to the cell membrane. The protein resides in the endoplasmic reticulum-Golgi intermediate compartment. In terms of biological role, the coatomer is a cytosolic protein complex that binds to dilysine motifs and reversibly associates with Golgi non-clathrin-coated vesicles, which further mediate biosynthetic protein transport from the ER, via the Golgi up to the trans Golgi network. Coatomer complex is required for budding from Golgi membranes, and is essential for the retrograde Golgi-to-ER transport of dilysine-tagged proteins. In mammals, the coatomer can only be recruited by membranes associated to ADP-ribosylation factors (ARFs), which are small GTP-binding proteins; the complex also influences the Golgi structural integrity, as well as the processing, activity, and endocytic recycling of LDL receptors. Plays a functional role in facilitating the transport of kappa-type opioid receptor mRNAs into axons and enhances translation of these proteins. Required for limiting lipid storage in lipid droplets. Involved in lipid homeostasis by regulating the presence of perilipin family members PLIN2 and PLIN3 at the lipid droplet surface and promoting the association of adipocyte surface triglyceride lipase (PNPLA2) with the lipid droplet to mediate lipolysis. Involved in the Golgi disassembly and reassembly processes during cell cycle. Involved in autophagy by playing a role in early endosome function. Plays a role in organellar compartmentalization of secretory compartments including endoplasmic reticulum (ER)-Golgi intermediate compartment (ERGIC), Golgi, trans-Golgi network (TGN) and recycling endosomes, and in biosynthetic transport of CAV1. The polypeptide is Coatomer subunit beta (Sus scrofa (Pig)).